Here is a 135-residue protein sequence, read N- to C-terminus: MSKEFSRTQRVSQQLQKELAVMLQREVRDSRIGMVTISDVEVSRDLAYAKVFVTFFCVGEQTPESSLAALKEHEPSLRMMLGKRIRLRLTPEIRFTYDNTLVEGMRMSNLVTDVVNTDKRKMAESGRTESDEGEE.

The protein belongs to the RbfA family. In terms of assembly, monomer. Binds 30S ribosomal subunits, but not 50S ribosomal subunits or 70S ribosomes.

The protein localises to the cytoplasm. In terms of biological role, one of several proteins that assist in the late maturation steps of the functional core of the 30S ribosomal subunit. Associates with free 30S ribosomal subunits (but not with 30S subunits that are part of 70S ribosomes or polysomes). Required for efficient processing of 16S rRNA. May interact with the 5'-terminal helix region of 16S rRNA. The sequence is that of Ribosome-binding factor A from Aliivibrio fischeri (strain ATCC 700601 / ES114) (Vibrio fischeri).